The chain runs to 77 residues: U11-lycotoxin-Ls1d (77 aa).

The first 20 residues, 1–20 (MKLIIFTGLVLFAIVSLIEA), serve as a signal peptide directing secretion. Positions 21-26 (EEESGR) are excised as a propeptide.

Belongs to the neurotoxin 19 (CSTX) family. 10 (U11-Lctx) subfamily. In terms of processing, contains 4 disulfide bonds. Expressed by the venom gland.

It localises to the secreted. The sequence is that of U11-lycotoxin-Ls1d from Lycosa singoriensis (Wolf spider).